Reading from the N-terminus, the 287-residue chain is Protease HtpX (287 aa).

2 helical membrane passes run 4–24 (VMLFLATNLAVVLVLSVVLNI) and 36–56 (LSGLLVMAAVFGFGGSFISLM). Histidine 143 provides a ligand contact to Zn(2+). Residue glutamate 144 is part of the active site. Zn(2+) is bound at residue histidine 147. The next 2 helical transmembrane spans lie at 158 to 178 (LMQGVVNTFVIFLSRFIANIV) and 192 to 212 (MVYFGVSMVLELVFGFLASFI). Position 221 (glutamate 221) interacts with Zn(2+).

Belongs to the peptidase M48B family. Zn(2+) serves as cofactor.

Its subcellular location is the cell inner membrane. The sequence is that of Protease HtpX from Vibrio atlanticus (strain LGP32) (Vibrio splendidus (strain Mel32)).